The following is a 1276-amino-acid chain: Probable histone acetyltransferase HAC-like 3 (1276 aa).

A disordered region spans residues 391-421 (VDRAEQTSNSTVSKPTSPASDGSSGKHYPAK). Over residues 396–413 (QTSNSTVSKPTSPASDGS) the composition is skewed to polar residues. Residues 621-689 (SSICGRCHHL…EYTCAKCFLK (69 aa)) form a PHD-type zinc finger. Residues 704–1130 (ILGARELPRT…ILYHLHDSTC (427 aa)) form the CBP/p300-type HAT domain. Acetyl-CoA is bound by residues 827–829 (IDS), 846–847 (RT), and Trp-902. Positions 953–973 (EAERLLEKKDDDTSQKKETQL) form a coiled coil. 2 ZZ-type zinc fingers span residues 1013–1076 (CLQQ…EEPL) and 1125–1187 (LHDS…LQDY). Residues Cys-1018, Cys-1021, Cys-1033, Cys-1036, Cys-1042, Cys-1045, His-1058, His-1066, Cys-1130, Cys-1133, Cys-1145, Cys-1148, Cys-1154, Cys-1157, His-1168, and His-1177 each coordinate Zn(2+). Residues 1177–1260 (HVLQKYTLQD…DCSAPRCRDI (84 aa)) form a TAZ-type zinc finger.

It is found in the nucleus. The catalysed reaction is L-lysyl-[protein] + acetyl-CoA = N(6)-acetyl-L-lysyl-[protein] + CoA + H(+). Acetyltransferase enzyme. Acetylates histones, giving a specific tag for transcriptional activation. The polypeptide is Probable histone acetyltransferase HAC-like 3 (Oryza sativa subsp. japonica (Rice)).